Reading from the N-terminus, the 398-residue chain is MSDEGSKRGSRADSLEAEPPLPPPPPPPPPGESSLVPTSPRYRPPLPAPLERIVGSGEPPVELAPRRKGEPLPPLPPSRLPGDQEVSAAGDSCEGPRRLPEVKLPEAAAGKGSPAEPEAGACREGERRGTGDQPETRSVYSSRSSSSGGSGDQRSGHQHQHHQPICKICFQGAEQGELLNPCRCDGSVRYTHQLCLLKWISERGSWTCELCCYRYHVTAIKMKQPCQWQSISITLVEKVQMIAVILGSLFLIASVTWLLWSAFSPYAVWQRKDILFQICYGMYGFMDLVCIGLIVHEGAAVYRVFKRWRAVNLHWDVLNYDKATDIEESSRGESSTSRTLWLPLSALRNRNLVHPTQLTSPRFQCGYVLLHLFNRMRAHEDVSEDNGSGEVVMRVTSV.

Over residues 1-14 (MSDEGSKRGSRADS) the composition is skewed to basic and acidic residues. The interval 1–158 (MSDEGSKRGS…GSGDQRSGHQ (158 aa)) is disordered. The segment covering 19-31 (PPLPPPPPPPPPG) has biased composition (pro residues). Basic and acidic residues-rich tracts occupy residues 94–104 (EGPRRLPEVKL) and 121–130 (ACREGERRGT). Residues 158–218 (QHQHHQPICK…ELCCYRYHVT (61 aa)) form an RING-CH-type zinc finger. Zn(2+)-binding residues include C166, C169, C182, C184, H192, C195, C208, and C211. A run of 2 helical transmembrane segments spans residues 241 to 261 (MIAV…LLWS) and 274 to 294 (ILFQ…IGLI). The YXXL motif motif lies at 367 to 370 (YVLL). The short motif at 395–398 (VTSV) is the PDZ-binding element.

In terms of assembly, interacts (YXXL motif) with AP1M1. Interacts (via PDZ-binding motif) with LIN7A. Interacts with unidentified fucose glycoproteins. As to expression, predominantly expressed in testis. Present in early developing spermatids. Not present in spermatogonia, spermatocytes or somatic cells (i.e. peritubular, Leydig, and Sertoli cells). Present in early round spermatids at step 4, remains until step 11, then it decreases at steps 12-15, and diminishes after step 16 (at protein level). Also expressed at lower level in brain.

The protein localises to the cytoplasmic vesicle membrane. It catalyses the reaction S-ubiquitinyl-[E2 ubiquitin-conjugating enzyme]-L-cysteine + [acceptor protein]-L-lysine = [E2 ubiquitin-conjugating enzyme]-L-cysteine + N(6)-ubiquitinyl-[acceptor protein]-L-lysine.. The protein operates within protein modification; protein ubiquitination. Functionally, E3 ubiquitin-protein ligase that mediates polyubiquitination of CD4. E3 ubiquitin ligases accept ubiquitin from an E2 ubiquitin-conjugating enzyme in the form of a thioester and then directly transfer the ubiquitin to targeted substrates. May play a role in ubuquitin-dependent protein sorting in developmenting spermatids. The polypeptide is E3 ubiquitin-protein ligase MARCHF11 (Marchf11) (Rattus norvegicus (Rat)).